A 100-amino-acid chain; its full sequence is Aspartyl/glutamyl-tRNA(Asn/Gln) amidotransferase subunit C (100 aa).

This sequence belongs to the GatC family. In terms of assembly, heterotrimer of A, B and C subunits.

It catalyses the reaction L-glutamyl-tRNA(Gln) + L-glutamine + ATP + H2O = L-glutaminyl-tRNA(Gln) + L-glutamate + ADP + phosphate + H(+). The enzyme catalyses L-aspartyl-tRNA(Asn) + L-glutamine + ATP + H2O = L-asparaginyl-tRNA(Asn) + L-glutamate + ADP + phosphate + 2 H(+). Functionally, allows the formation of correctly charged Asn-tRNA(Asn) or Gln-tRNA(Gln) through the transamidation of misacylated Asp-tRNA(Asn) or Glu-tRNA(Gln) in organisms which lack either or both of asparaginyl-tRNA or glutaminyl-tRNA synthetases. The reaction takes place in the presence of glutamine and ATP through an activated phospho-Asp-tRNA(Asn) or phospho-Glu-tRNA(Gln). The polypeptide is Aspartyl/glutamyl-tRNA(Asn/Gln) amidotransferase subunit C (Staphylococcus haemolyticus (strain JCSC1435)).